The chain runs to 1061 residues: Transcription factor GTE10 (1061 aa).

2 disordered regions span residues 32–56 (ERMN…NNGV) and 106–152 (NDHS…RLNV). Residues 109–118 (SCSDGPRRPP) show a composition bias toward basic and acidic residues. The Bromo domain maps to 156–262 (YTVASVMKEC…KYFESGWKSI (107 aa)). Residues 304–386 (KLRVEPAKLV…DYLREKKKSM (83 aa)) enclose the NET domain. 4 disordered regions span residues 443-518 (ACRN…LNEL), 538-558 (VPDE…PDKR), 606-645 (KERL…ARQA), and 710-1033 (HLGL…GNGK). The span at 448 to 476 (ESSSSSSSSSESGSSSSDSDSCSSSGSET) shows a compositional bias: low complexity. Basic and acidic residues predominate over residues 477–506 (DSIKASKPTSREEKKQPGVGIDKKEDDSNS). The stretch at 588 to 658 (PEKLRIEREE…MEKTVEINEG (71 aa)) forms a coiled coil. 5 stretches are compositionally biased toward basic and acidic residues: residues 733–755 (RKVE…RVEG), 770–792 (EAHD…ERQL), 828–852 (EEVH…EDPR), 860–883 (VSEK…REEQ), and 912–929 (LSLD…REEG). Residues 852 to 893 (RASGNEESVSEKAQDYENQRDEKINQSEREEQLENVLEQESS) are a coiled coil. Polar residues predominate over residues 940 to 949 (LVSQKTQDNG). Basic and acidic residues-rich tracts occupy residues 952 to 962 (EDEKSINKIEG) and 990 to 1002 (GEQK…KGVE).

In terms of assembly, interacts with TIP/NAC091. Widely expressed in all tissues.

It is found in the nucleus. Acts as a negative regulator in plant response to changes in environmental conditions through the control of ABA-regulated gene expression. The chain is Transcription factor GTE10 (GTE10) from Arabidopsis thaliana (Mouse-ear cress).